Consider the following 306-residue polypeptide: Ribosomal RNA small subunit methyltransferase H (306 aa).

S-adenosyl-L-methionine is bound by residues Gly33 to Tyr35, Asp51, Phe78, Asp96, and Gln103.

The protein belongs to the methyltransferase superfamily. RsmH family.

It is found in the cytoplasm. It catalyses the reaction cytidine(1402) in 16S rRNA + S-adenosyl-L-methionine = N(4)-methylcytidine(1402) in 16S rRNA + S-adenosyl-L-homocysteine + H(+). Its function is as follows. Specifically methylates the N4 position of cytidine in position 1402 (C1402) of 16S rRNA. The polypeptide is Ribosomal RNA small subunit methyltransferase H (Rickettsia prowazekii (strain Madrid E)).